The primary structure comprises 395 residues: MAETFLFTSESVNEGHPDKLCDQISDAVLDACLAQDPDSKVACETCTKTNMVMVFGEITTKADVDYEKIVRDTCRNIGFTSADVGLDADNCKVLVNIEQQSSDIAQGVHGHFSKRPEEIGAGDQGHMFGYATDETPELMPLSHVLATKLGARLTEVRKNGTCAWLRPDGKTQVTVEYYNENGAMVPIRVHTVLISTQHDETVTNDEIAADLKEHVIKPVIPEKYLDEKTIFHLNPSGRFVIGGPHGDAGLTGRKIIIDTYGGWGAHGGGAFSGKDPTKVDRSGAYIVRQAAKSIVASGLARRCIVQVSYAIGVPEPLSVFVDTYGTGKIPDKEILQIVKESFDFRPGMISINLDLKRGGNSRFLKTAAYGHFGRDDPDFTWEVVKPLKWDNKVQA.

Mg(2+) is bound at residue Glu10. His16 contacts ATP. Glu44 contacts K(+). The L-methionine site is built by Glu57 and Gln100. Residues 168-170 (DGK), 236-239 (SGRF), Asp247, 253-254 (RK), Ala270, Lys274, and Lys278 each bind ATP. Residue Asp247 coordinates L-methionine. Lys278 lines the L-methionine pocket.

Belongs to the AdoMet synthase family. In terms of assembly, homotetramer. It depends on Mn(2+) as a cofactor. Requires Mg(2+) as cofactor. Co(2+) serves as cofactor. K(+) is required as a cofactor.

It localises to the cytoplasm. The enzyme catalyses L-methionine + ATP + H2O = S-adenosyl-L-methionine + phosphate + diphosphate. The protein operates within amino-acid biosynthesis; S-adenosyl-L-methionine biosynthesis; S-adenosyl-L-methionine from L-methionine: step 1/1. Catalyzes the formation of S-adenosylmethionine from methionine and ATP. The reaction comprises two steps that are both catalyzed by the same enzyme: formation of S-adenosylmethionine (AdoMet) and triphosphate, and subsequent hydrolysis of the triphosphate. This chain is S-adenosylmethionine synthase 5 (METK5), found in Populus trichocarpa (Western balsam poplar).